Reading from the N-terminus, the 224-residue chain is Non-structural protein V (224 aa).

Residues 54 to 65 (QKNIQHPTASHQ) are compositionally biased toward polar residues. Disordered stretches follow at residues 54 to 94 (QKNI…TQIP) and 150 to 172 (TEFKRGAGSGCSRPDNPRGGHRR). Zn(2+) contacts are provided by His170, Cys189, Cys193, Cys205, Cys207, Cys210, Cys214, and Cys217.

This sequence belongs to the paramyxoviruses V protein family. As to quaternary structure, interacts with host IFIH1/MDA5 and DHX58/LGP2. Forms with host DDB1, CUL4A, STAT1, STAT2 and STAT3 the mumps virus V-dependent complex (VDC).

The protein localises to the virion. The protein resides in the host cytoplasm. Its function is as follows. Plays an essential role in the inhibition of host immune response. Prevents the establishment of cellular antiviral state by blocking interferon-alpha/beta (IFN-alpha/beta) production and signaling pathway. Interacts with host IFIH1/MDA5 and DHX58/LGP2 to inhibit the transduction pathway involved in the activation of IFN-beta promoter, thus protecting the virus against cell antiviral state. Blocks the type I and II interferon signaling pathways by interacting with host STAT1, STAT2 and STAT3, and mediating their ubiquitination and subsequent proteasomal degradation. This Homo sapiens (Human) protein is Non-structural protein V.